Reading from the N-terminus, the 115-residue chain is Large ribosomal subunit protein bL19 (115 aa).

Belongs to the bacterial ribosomal protein bL19 family.

This protein is located at the 30S-50S ribosomal subunit interface and may play a role in the structure and function of the aminoacyl-tRNA binding site. This Koribacter versatilis (strain Ellin345) protein is Large ribosomal subunit protein bL19.